We begin with the raw amino-acid sequence, 478 residues long: Alpha-1,3-mannosyl-glycoprotein 4-beta-N-acetylglucosaminyltransferase C (478 aa).

Topologically, residues 1–23 (MFKFHQMKHIFEILDKMRCLRKR) are cytoplasmic. Residues 24 to 44 (STVSFLGVLVIFLLFMNLYIE) form a helical; Signal-anchor for type II membrane protein membrane-spanning segment. Over 45 to 478 (DSYVLEGDKQ…IIRSISIWTS (434 aa)) the chain is Lumenal. 2 N-linked (GlcNAc...) asparagine glycosylation sites follow: asparagine 84 and asparagine 215.

It belongs to the glycosyltransferase 54 family. The cofactor is a divalent metal cation.

The protein resides in the golgi apparatus membrane. It carries out the reaction N(4)-{beta-D-GlcNAc-(1-&gt;2)-alpha-D-Man-(1-&gt;3)-[beta-D-GlcNAc-(1-&gt;2)-alpha-D-Man-(1-&gt;6)]-beta-D-Man-(1-&gt;4)-beta-D-GlcNAc-(1-&gt;4)-beta-D-GlcNAc}-L-asparaginyl-[protein] + UDP-N-acetyl-alpha-D-glucosamine = N(4)-{beta-D-GlcNAc-(1-&gt;2)-[beta-D-GlcNAc-(1-&gt;4)]-alpha-D-Man-(1-&gt;3)-[beta-D-GlcNAc-(1-&gt;2)-alpha-D-Man-(1-&gt;6)]-beta-D-Man-(1-&gt;4)-beta-D-GlcNAc-(1-&gt;4)-beta-D-GlcNAc}-L-asparaginyl-[protein] + UDP + H(+). The protein operates within protein modification; protein glycosylation. Functionally, glycosyltransferase that participates in the transfer of N-acetylglucosamine (GlcNAc) to the core mannose residues of N-linked glycans. Catalyzes the formation of the GlcNAcbeta1-4 branch on the GlcNAcbeta1-2Manalpha1-3 arm of the core structure of N-linked glycans. Essential for the production of tri- and tetra-antennary N-linked sugar chains. Does not catalyze the transfer of GlcNAc to the Manalpha1-6 arm to form GlcNAcBeta1-4Manalpha1-6 linkage ('GnT-VI' activity). The polypeptide is Alpha-1,3-mannosyl-glycoprotein 4-beta-N-acetylglucosaminyltransferase C (MGAT4C) (Macaca fascicularis (Crab-eating macaque)).